The sequence spans 333 residues: Structure-specific endonuclease subunit SLX1 homolog (333 aa).

Positions 68-157 constitute a GIY-YIG domain; sequence DFFGVYCLLS…KSRRLRLLNL (90 aa). The segment at 237–293 adopts an SLX1-type zinc-finger fold; sequence CSLCLKPILSISELLRCHANETCKSHFHMRCLSKHALNAVDEYRTSLFPIQGQCPKC.

This sequence belongs to the SLX1 family. In terms of assembly, forms a heterodimer with a member of the SLX4 family. The cofactor is a divalent metal cation.

Its subcellular location is the nucleus. Functionally, catalytic subunit of a heterodimeric structure-specific endonuclease that resolves DNA secondary structures generated during DNA repair and recombination. Has endonuclease activity towards branched DNA substrates, introducing single-strand cuts in duplex DNA close to junctions with ss-DNA. This is Structure-specific endonuclease subunit SLX1 homolog from Brugia malayi (Filarial nematode worm).